Consider the following 1399-residue polypeptide: Alpha-glucan water dikinase 1, chloroplastic (1399 aa).

The N-terminal 75 residues, 1-75 (MSNSVVHNLL…GRPLSFVPRA (75 aa)), are a transit peptide targeting the chloroplast. Valine 76 carries the N-acetylvaline modification. Residues 265 to 306 (LLKKDNSNESPKSNGTSSSGREEKKKVSKQPERKKNYNTDKI) form a disordered region. Residues 272–283 (NESPKSNGTSSS) are compositionally biased toward polar residues. Basic and acidic residues predominate over residues 284-306 (GREEKKKVSKQPERKKNYNTDKI). Histidine 1004 serves as the catalytic Tele-phosphohistidine intermediate.

The protein belongs to the PEP-utilizing enzyme family. As to quaternary structure, homodimer. Mg(2+) is required as a cofactor.

The protein resides in the plastid. The protein localises to the chloroplast. The enzyme catalyses [(1-&gt;4)-alpha-D-glucosyl](n) + n ATP + n H2O = [(1-&gt;4)-6-phospho-alpha-D-glucosyl](n) + n AMP + n phosphate + 2n H(+). Its function is as follows. Mediates the incorporation of phosphate into starch-like alpha-glucan, mostly at the C-6 position of glucose units. Acts as an overall regulator of starch mobilization. Required for starch degradation, suggesting that the phosphate content of starch regulates its degradability. In Arabidopsis thaliana (Mouse-ear cress), this protein is Alpha-glucan water dikinase 1, chloroplastic.